Reading from the N-terminus, the 325-residue chain is DNA repair and recombination protein RadA (325 aa).

107–114 (GEFGSGKT) contacts ATP.

This sequence belongs to the eukaryotic RecA-like protein family.

In terms of biological role, involved in DNA repair and in homologous recombination. Binds and assemble on single-stranded DNA to form a nucleoprotein filament. Hydrolyzes ATP in a ssDNA-dependent manner and promotes DNA strand exchange between homologous DNA molecules. The chain is DNA repair and recombination protein RadA from Methanosarcina barkeri (strain Fusaro / DSM 804).